A 65-amino-acid polypeptide reads, in one-letter code: MPKMKTNRGAAKRFRKTASGRFKSKQSHLRHILTKKSSKRKRHLRGKKLAHVADTALIQRMLPYV.

Residues 1 to 30 (MPKMKTNRGAAKRFRKTASGRFKSKQSHLR) form a disordered region. Residues 10 to 30 (AAKRFRKTASGRFKSKQSHLR) are compositionally biased toward basic residues.

It belongs to the bacterial ribosomal protein bL35 family.

The chain is Large ribosomal subunit protein bL35 from Pseudoalteromonas atlantica (strain T6c / ATCC BAA-1087).